Consider the following 84-residue polypeptide: uncharacterized protein (84 aa).

The next 2 membrane-spanning stretches (helical) occupy residues 7–27 (HVNF…ILCI) and 52–72 (ITII…INPC).

The protein resides in the membrane. This is an uncharacterized protein from Saccharomyces cerevisiae (strain ATCC 204508 / S288c) (Baker's yeast).